A 358-amino-acid chain; its full sequence is scyllo-inositol 2-dehydrogenase (NADP(+)) IolW (358 aa).

Belongs to the Gfo/Idh/MocA family.

The enzyme catalyses scyllo-inositol + NADP(+) = scyllo-inosose + NADPH + H(+). Its function is as follows. Catalyzes the reversible NADPH-dependent reduction of scyllo-inosose (SIS) to scyllo-inositol (SI). Cannot use NADH instead of NADPH. May be involved in reduction of not only SIS but also various oxidized compounds manifested upon stressful conditions. The chain is scyllo-inositol 2-dehydrogenase (NADP(+)) IolW from Bacillus subtilis (strain 168).